The following is a 474-amino-acid chain: Melanopsin (474 aa).

Over 1 to 72 (MNSPSESRVP…VDVPDHAHYT (72 aa)) the chain is Extracellular. N31 and N35 each carry an N-linked (GlcNAc...) asparagine glycan. Residues 73–93 (LGTVILLVGLTGMLGNLTVIY) form a helical membrane-spanning segment. The Cytoplasmic segment spans residues 94-107 (TFCRNRGLRTPANM). The chain crosses the membrane as a helical span at residues 108–128 (LIINLAVSDFLMSFTQAPVFF). Residues 129-144 (ASSLYKKWLFGETGCK) lie on the Extracellular side of the membrane. A disulfide bond links C143 and C221. The helical transmembrane segment at 145–165 (FYAFCGAVFGIVSMITLTAIA) threads the bilayer. The Cytoplasmic portion of the chain corresponds to 166–188 (MDRYLVITRPLATIGMRSKRRTA). The chain crosses the membrane as a helical span at residues 189 to 209 (LVLLGVWLYALAWSLPPFFGW). Topologically, residues 210–238 (SAYVPEGLLTSCSWDYVTFTPLVRAYTML) are extracellular. Residues 239–259 (LFCFVFFLPLLIIIFCYIFIF) form a helical membrane-spanning segment. Over 260–293 (RAIRETGRACEGCGESPLRRRQWQRLQSEWKMAK) the chain is Cytoplasmic. A helical transmembrane segment spans residues 294 to 314 (VALIVILLFVLSWAPYSTVAL). At 315–355 (VGFAGYSHILTPYMSSVPAVIAKASAIHNPIIYAITHPKYR) the chain is on the extracellular side. The residue at position 337 (K337) is an N6-(retinylidene)lysine. The helical transmembrane segment at 356 to 372 (AAIAQHLPCLGVLLGVS) threads the bilayer. The Cytoplasmic segment spans residues 373–474 (GQRSHPSLSY…RHLPSLDRRM (102 aa)). Positions 428-474 (AAQQASGQSFCSHDLEDGEVKAPSSPQEQKSKTPKTKRHLPSLDRRM) are disordered.

Belongs to the G-protein coupled receptor 1 family. Opsin subfamily. Eye; expressed in a photosensitive subset of retinal ganglion cells (at protein level).

The protein resides in the cell membrane. Its subcellular location is the cell projection. It is found in the axon. It localises to the dendrite. The protein localises to the perikaryon. Functionally, photoreceptor that binds cis-retinaldehydes. Contributes to pupillar reflex, photoentrainment and other non-image forming responses to light. May be involved in the optokinetic visual tracking response. May be involved in the regulation of retinal hyaloid vessel growth and regression. The polypeptide is Melanopsin (Rattus norvegicus (Rat)).